Here is a 124-residue protein sequence, read N- to C-terminus: Small ribosomal subunit protein uS12 (124 aa).

The interval 1-29 (MPTINQLVRRPRRPRESANKAPALQHNPQ) is disordered. 3-methylthioaspartic acid is present on D90.

This sequence belongs to the universal ribosomal protein uS12 family. As to quaternary structure, part of the 30S ribosomal subunit. Contacts proteins S8 and S17. May interact with IF1 in the 30S initiation complex.

With S4 and S5 plays an important role in translational accuracy. Its function is as follows. Interacts with and stabilizes bases of the 16S rRNA that are involved in tRNA selection in the A site and with the mRNA backbone. Located at the interface of the 30S and 50S subunits, it traverses the body of the 30S subunit contacting proteins on the other side and probably holding the rRNA structure together. The combined cluster of proteins S8, S12 and S17 appears to hold together the shoulder and platform of the 30S subunit. The polypeptide is Small ribosomal subunit protein uS12 (Anaplasma marginale (strain Florida)).